Here is a 447-residue protein sequence, read N- to C-terminus: MAFPGSGRSIPGQLCAGVFSGLIQPPLGQKFYCPNGGGAVPSPLPQALSAPQCNGEGRDPEPDRPIGYGAFGVVWSVTDPRDGKRVALKKMPNVFQNLVSCKRVFRELKMLCFFKHDNVLSALDILQPPQIDCFEEIYVITELMQTDLHKVIVSPQPLSSDHIKVFLYQILRGLKYLHSAGILHRDIKPGNLLVNSNCVLKICDFGLARVEELDESQHMTQEVVTQYYRAPEILMGSRHYRSAIDIWSVGCIFAELLGRRILFQAQSPIQQLDLITDLLGTPPLTAMRSACEGARAHILRGPHKPPSLSVLYMLSGEATHEAVHLLCRMLLFDPLKRISAKDALAHPYLEEGRLRYHTCMCHCCYSVSSGRVYTADFEPTATNRFDDSYEKSLTSVWQVKELVHRFITDQHQGKRPPLCINPHSAAFKTFIRSTAWHSSKVSKKEER.

The Protein kinase domain maps to 60 to 349 (PEPDRPIGYG…AKDALAHPYL (290 aa)). ATP contacts are provided by residues 66-74 (IGYGAFGVV) and Lys89. Asp186 functions as the Proton acceptor in the catalytic mechanism.

The protein belongs to the protein kinase superfamily. CMGC Ser/Thr protein kinase family. MAP kinase subfamily. As to quaternary structure, interacts with sox11, hmgxb4/hmg2l1, rnf138/narf, stat3.1 and mef2a. The cofactor is Mg(2+). In terms of tissue distribution, expressed widely in the ectoderm during early gastrula stage when neural induction is taking place. Expressed in the head region of neurula stage embryos. At the end of neurulation, expression becomes localized to the nervous system, and is restricted to the central nervous system, eye and head neural crest cells by the early tadpole stages.

It is found in the nucleus. The protein resides in the cytoplasm. The enzyme catalyses L-seryl-[protein] + ATP = O-phospho-L-seryl-[protein] + ADP + H(+). It catalyses the reaction L-threonyl-[protein] + ATP = O-phospho-L-threonyl-[protein] + ADP + H(+). Its activity is regulated as follows. Activated by tyrosine and threonine phosphorylation. Its function is as follows. Negatively regulates Wnt/beta-catenin-signaling during development. Plays a role together with sox11 in neural induction during early embryogenesis. Involved in TGFbeta-mediated mesoderm induction in early embryos, acting downstream of map3k7/tak1 to phosphorylate stat3.1. Augments the rnf138/narf-directed ubiquitination and degradation of tcf/lef by enhancing the association of rnf138/narf and tcf/lef. Phosphorylates mef2a to play a role in anterior neural development, including eye formation. This Xenopus laevis (African clawed frog) protein is Serine/threonine-protein kinase NLK2 (nlk.2).